The following is a 274-amino-acid chain: NH(3)-dependent NAD(+) synthetase (274 aa).

Residue 46 to 53 (GISGGQDS) participates in ATP binding. Position 52 (aspartate 52) interacts with Mg(2+). Arginine 140 is a deamido-NAD(+) binding site. Residue threonine 160 participates in ATP binding. Position 165 (glutamate 165) interacts with Mg(2+). Residues lysine 173 and aspartate 180 each contribute to the deamido-NAD(+) site. Lysine 189 and threonine 211 together coordinate ATP. 260–261 (HK) contributes to the deamido-NAD(+) binding site.

Belongs to the NAD synthetase family. Homodimer.

The catalysed reaction is deamido-NAD(+) + NH4(+) + ATP = AMP + diphosphate + NAD(+) + H(+). Its pathway is cofactor biosynthesis; NAD(+) biosynthesis; NAD(+) from deamido-NAD(+) (ammonia route): step 1/1. Catalyzes the ATP-dependent amidation of deamido-NAD to form NAD. Uses ammonia as a nitrogen source. This chain is NH(3)-dependent NAD(+) synthetase, found in Sodalis glossinidius (strain morsitans).